Here is a 115-residue protein sequence, read N- to C-terminus: Hydrogenase maturation factor HypA (115 aa).

Histidine 2 is a binding site for Ni(2+). Positions 73, 76, 89, and 92 each coordinate Zn(2+).

This sequence belongs to the HypA/HybF family.

Functionally, involved in the maturation of [NiFe] hydrogenases. Required for nickel insertion into the metal center of the hydrogenase. This chain is Hydrogenase maturation factor HypA, found in Parabacteroides distasonis (strain ATCC 8503 / DSM 20701 / CIP 104284 / JCM 5825 / NCTC 11152).